Here is a 191-residue protein sequence, read N- to C-terminus: UPF0149 protein VV1_1551 (191 aa).

Belongs to the UPF0149 family.

This chain is UPF0149 protein VV1_1551, found in Vibrio vulnificus (strain CMCP6).